Here is a 403-residue protein sequence, read N- to C-terminus: Serine/threonine transporter SstT (403 aa).

8 helical membrane-spanning segments follow: residues 11–31 (GNLVIRIAIGLVLGVLLAFIS), 51–71 (AIAPILVFVLVLSAIANKEVG), 81–101 (VMYVLGTFLAALTAVVFSFIF), 138–158 (ALANANFIGILAWAIGLGIPL), 175–195 (AVSYVVKMVISVAPIGVFGLV), 213–233 (LLGVLLGAMMTVIFVLDPILV), 285–305 (VAIPLGATINMAGAAITVTVL), and 319–339 (FMTALLLSIVASICACGASGV).

The protein belongs to the dicarboxylate/amino acid:cation symporter (DAACS) (TC 2.A.23) family.

It is found in the cell inner membrane. It catalyses the reaction L-serine(in) + Na(+)(in) = L-serine(out) + Na(+)(out). It carries out the reaction L-threonine(in) + Na(+)(in) = L-threonine(out) + Na(+)(out). In terms of biological role, involved in the import of serine and threonine into the cell, with the concomitant import of sodium (symport system). The chain is Serine/threonine transporter SstT from Haemophilus ducreyi (strain 35000HP / ATCC 700724).